A 315-amino-acid chain; its full sequence is Ribosomal RNA small subunit methyltransferase H (315 aa).

Residues 37–39, Asp-57, Tyr-84, Asp-105, and Gln-112 each bind S-adenosyl-L-methionine; that span reads AGH.

Belongs to the methyltransferase superfamily. RsmH family.

It localises to the cytoplasm. It carries out the reaction cytidine(1402) in 16S rRNA + S-adenosyl-L-methionine = N(4)-methylcytidine(1402) in 16S rRNA + S-adenosyl-L-homocysteine + H(+). In terms of biological role, specifically methylates the N4 position of cytidine in position 1402 (C1402) of 16S rRNA. The chain is Ribosomal RNA small subunit methyltransferase H from Lachnospira eligens (strain ATCC 27750 / DSM 3376 / VPI C15-48 / C15-B4) (Eubacterium eligens).